A 120-amino-acid polypeptide reads, in one-letter code: Insulin-like peptide 3 (120 aa).

The signal sequence occupies residues 1 to 29; the sequence is MGIEMRCQDRRILLPSLLLLILMIGGVQA. 3 disulfides stabilise this stretch: C34-C101, C46-C114, and C100-C105. The propeptide at 51 to 89 is connecting peptide; sequence NAMTKRTLDPVNFNQIDGFEDRSLLERLLSDSSVQMLKT.

This sequence belongs to the insulin family. In terms of assembly, heterodimer of a B chain and an A chain linked by two disulfide bonds. As to expression, expressed at a high level in seven cells of each larval brain hemisphere that may correspond to neurosecretory cells.

It is found in the secreted. In terms of biological role, possible ligand of InR/insulin-like receptor. The protein is Insulin-like peptide 3 of Drosophila melanogaster (Fruit fly).